Here is an 88-residue protein sequence, read N- to C-terminus: Cell division topological specificity factor (88 aa).

The protein belongs to the MinE family.

Prevents the cell division inhibition by proteins MinC and MinD at internal division sites while permitting inhibition at polar sites. This ensures cell division at the proper site by restricting the formation of a division septum at the midpoint of the long axis of the cell. The sequence is that of Cell division topological specificity factor from Methylibium petroleiphilum (strain ATCC BAA-1232 / LMG 22953 / PM1).